Here is a 245-residue protein sequence, read N- to C-terminus: Rhamnosyl O-methyltransferase (245 aa).

Positions Met1–Ala38 are cleaved as a signal peptide.

The protein belongs to the rhamnosyl O-methyltransferase family.

Catalyzes the O-methylation of the hydroxyl group located on C-2 of the first rhamnosyl residue linked to the phenolic group of glycosylated phenolphthiocerol dimycocerosates (PGL) and p-hydroxybenzoic acid derivatives (p-HBAD). This is Rhamnosyl O-methyltransferase from Mycobacterium bovis (strain ATCC BAA-935 / AF2122/97).